The following is a 608-amino-acid chain: Membrane protein insertase YidC (608 aa).

A helical membrane pass occupies residues 8-28 (LLLATALSFLVILGWYFFFPP). The segment at 33 to 61 (PQPATEVTETAPQGDTTAPAAAPSAGAAT) is disordered. 5 helical membrane passes run 378 to 398 (MGVA…PLAY), 448 to 468 (LPIL…FVTL), 482 to 502 (LSVP…WAAP), 506 to 526 (SLLS…SMWV), and 542 to 562 (IFAW…SGLV).

This sequence belongs to the OXA1/ALB3/YidC family. Type 1 subfamily. Interacts with the Sec translocase complex via SecD. Specifically interacts with transmembrane segments of nascent integral membrane proteins during membrane integration.

The protein localises to the cell inner membrane. Required for the insertion and/or proper folding and/or complex formation of integral membrane proteins into the membrane. Involved in integration of membrane proteins that insert both dependently and independently of the Sec translocase complex, as well as at least some lipoproteins. Aids folding of multispanning membrane proteins. This Ruegeria sp. (strain TM1040) (Silicibacter sp.) protein is Membrane protein insertase YidC.